We begin with the raw amino-acid sequence, 359 residues long: Peptide chain release factor 1 (359 aa).

Q235 bears the N5-methylglutamine mark.

It belongs to the prokaryotic/mitochondrial release factor family. In terms of processing, methylated by PrmC. Methylation increases the termination efficiency of RF1.

The protein resides in the cytoplasm. In terms of biological role, peptide chain release factor 1 directs the termination of translation in response to the peptide chain termination codons UAG and UAA. The protein is Peptide chain release factor 1 of Aromatoleum aromaticum (strain DSM 19018 / LMG 30748 / EbN1) (Azoarcus sp. (strain EbN1)).